Here is a 651-residue protein sequence, read N- to C-terminus: Acetyl-coenzyme A synthetase (651 aa).

Residues 189–192, Thr311, and Asn335 each bind CoA; that span reads RGGK. ATP is bound by residues 387-389, 411-416, Asp500, and Arg515; these read GEP and DTWWQT. Ser523 contacts CoA. Residue Arg526 coordinates ATP. Val537, His539, and Val542 together coordinate Mg(2+). Arg584 serves as a coordination point for CoA. Position 609 is an N6-acetyllysine (Lys609).

This sequence belongs to the ATP-dependent AMP-binding enzyme family. Mg(2+) serves as cofactor. In terms of processing, acetylated. Deacetylation by the SIR2-homolog deacetylase activates the enzyme.

The catalysed reaction is acetate + ATP + CoA = acetyl-CoA + AMP + diphosphate. Its function is as follows. Catalyzes the conversion of acetate into acetyl-CoA (AcCoA), an essential intermediate at the junction of anabolic and catabolic pathways. AcsA undergoes a two-step reaction. In the first half reaction, AcsA combines acetate with ATP to form acetyl-adenylate (AcAMP) intermediate. In the second half reaction, it can then transfer the acetyl group from AcAMP to the sulfhydryl group of CoA, forming the product AcCoA. The sequence is that of Acetyl-coenzyme A synthetase from Agrobacterium fabrum (strain C58 / ATCC 33970) (Agrobacterium tumefaciens (strain C58)).